The primary structure comprises 352 residues: N-terminal EF-hand calcium-binding protein 1 (352 aa).

At S4 the chain carries Phosphoserine. EF-hand domains are found at residues 26–61 and 60–95; these read KGMSIFLDILRRADKNDDGKLSFEEFKAYFADGVLS and LSGEELHELFHTIDTHNTNNLDTEELCEYFSQHLGE. The Ca(2+) site is built by D39, N41, D43, K45, and E50. The stretch at 135–163 forms a coiled coil; it reads LLKETLNQLQSLQNSLECAMETTEEQTRQ. A disordered region spans residues 155 to 202; it reads ETTEEQTRQERQGPSKPEVLSIQWPGKRSSRRVQRHNSFSPNSPQFNV. Residues 190–202 are compositionally biased toward polar residues; it reads HNSFSPNSPQFNV. Residues S192 and S197 each carry the phosphoserine modification. Positions 209-275 form a coiled coil; that stretch reads EEDNQWMTQI…EEFQLALKHY (67 aa). The ABM domain maps to 252–340; that stretch reads MLVQRQMSVT…LETPELTSTM (89 aa).

As to quaternary structure, interacts with STX1. May interact with CPNE6.

It is found in the cytoplasm. The sequence is that of N-terminal EF-hand calcium-binding protein 1 (Necab1) from Rattus norvegicus (Rat).